The chain runs to 548 residues: MKKVTAMLFSMAVGLNAVSMAAKAKASEEQETDVLLIGGGIMSATLGTYLRELEPEWSMTMVERLEGVAQESSNGWNNAGTGHSALMELNYTPQNADGSISIEKAVAINEAFQISRQFWAHQVERGVLRTPRSFINTVPHMSFVWGEDNVNFLRARYAALQQSSLFRGMRYSEDHAQIKEWAPLVMEGRDPQQKVAATRTEIGTDVNYGEITRQLIASLQKKSNFSLQLSSEVRALKRNDDNTWTVTVADLKNGTAQNIRAKFVFIGAGGAALKLLQESGIPEAKDYAGFPVGGQFLVSENPDVVNHHLAKVYGKASVGAPPMSVPHIDTRVLDGKRVVLFGPFATFSTKFLKNGSLWDLMSSTTTSNVMPMMHVGLDNFDLVKYLVSQVMLSEEDRFEALKEYYPQAKKEDWRLWQAGQRVQIIKRDAEKGGVLRLGTEVVSDQQGTIAALLGASPGASTAAPIMLNLLEKVFGDRVSSPQWQATLKAIVPSYGRKLNGDVAATERELQYTSEVLGLKYDKPQAADSTPKPQLKPQPVQKEVADIAL.

Positions Asp-521–Leu-548 are disordered. A compositionally biased stretch (low complexity) spans Pro-530 to Lys-541.

Belongs to the MQO family. FAD serves as cofactor.

The enzyme catalyses (S)-malate + a quinone = a quinol + oxaloacetate. The protein operates within carbohydrate metabolism; tricarboxylic acid cycle; oxaloacetate from (S)-malate (quinone route): step 1/1. The chain is Probable malate:quinone oxidoreductase from Escherichia coli O17:K52:H18 (strain UMN026 / ExPEC).